The chain runs to 547 residues: Membrane transporter D1 (547 aa).

Topologically, residues Met1–Arg2 are cytoplasmic. A helical membrane pass occupies residues Ala3–Ala25. Residues Ala26–Tyr43 lie on the Extracellular side of the membrane. The helical transmembrane segment at Ala44–Ile64 threads the bilayer. Over Ser65 to Asp78 the chain is Cytoplasmic. Residues Ala79–Val99 traverse the membrane as a helical segment. Topologically, residues Ser100–Arg101 are extracellular. Residues Val102 to Val122 traverse the membrane as a helical segment. The Cytoplasmic portion of the chain corresponds to Thr123–Asn136. A helical membrane pass occupies residues Leu137–Thr157. Over Ser158–Arg164 the chain is Extracellular. A helical transmembrane segment spans residues Val165–Leu185. The Cytoplasmic portion of the chain corresponds to Pro186–Gly245. The helical transmembrane segment at Leu246–Leu266 threads the bilayer. Residues Tyr267–Met276 lie on the Extracellular side of the membrane. The helical transmembrane segment at Pro277–Phe297 threads the bilayer. At Thr298–Leu308 the chain is on the cytoplasmic side. A helical transmembrane segment spans residues Leu309 to Ile329. The Extracellular portion of the chain corresponds to Gly330–Gly339. Residues Gly340–Ile360 form a helical membrane-spanning segment. Topologically, residues Pro361 to Asn385 are cytoplasmic. Residues Trp386–Gly406 traverse the membrane as a helical segment. A topological domain (extracellular) is located at residue Gly407. Residues Thr408 to Val428 traverse the membrane as a helical segment. Topologically, residues Glu429 to Lys547 are cytoplasmic. Disordered regions lie at residues Pro449 to Asp468 and Val510 to Lys547. Residues Thr519–Glu529 are compositionally biased toward polar residues.

It belongs to the major facilitator superfamily. Sugar transporter (TC 2.A.1.1) family.

It localises to the membrane. This is Membrane transporter D1 from Leishmania donovani.